A 449-amino-acid polypeptide reads, in one-letter code: Cyclin-B1-5 (449 aa).

Disordered stretches follow at residues 1-37 (MATR…AGRP) and 98-147 (PARK…GGSA). Low complexity-rich tracts occupy residues 8–37 (AAAA…AGRP) and 136–147 (SEGAGSSSGGSA).

Belongs to the cyclin family. Cyclin AB subfamily.

This chain is Cyclin-B1-5 (CYCB1-5), found in Oryza sativa subsp. japonica (Rice).